The primary structure comprises 100 residues: Large ribosomal subunit protein uL23 (100 aa).

This sequence belongs to the universal ribosomal protein uL23 family. Part of the 50S ribosomal subunit. Contacts protein L29, and trigger factor when it is bound to the ribosome.

In terms of biological role, one of the early assembly proteins it binds 23S rRNA. One of the proteins that surrounds the polypeptide exit tunnel on the outside of the ribosome. Forms the main docking site for trigger factor binding to the ribosome. The polypeptide is Large ribosomal subunit protein uL23 (Aggregatibacter actinomycetemcomitans (Actinobacillus actinomycetemcomitans)).